We begin with the raw amino-acid sequence, 725 residues long: Ophiobolin F synthase (725 aa).

The (7Z)-ophiobola-7,19-dien-3-ol synthase stretch occupies residues 1-322 (MEYKYSTIVD…RYHADAKFNE (322 aa)). Residues Asp93 and Asp97 each contribute to the Mg(2+) site. Asp93 provides a ligand contact to substrate. The short motif at 93–97 (DDEID) is the DDXXD 1 element. Substrate-binding positions include 182 to 185 (RCMD), Asn226, 230 to 234 (SYEKE), and 313 to 314 (RY). The short motif at 226-234 (NDLFSYEKE) is the NSE/DTE element. Residues 323 to 725 (LQMLRAEHGV…LRMMLELLKV (403 aa)) are geranylfarnesyl diphosphate synthase. The tract at residues 362–388 (GVNGVNGKRKRSGEETADDARTNGNGI) is disordered. A compositionally biased stretch (basic and acidic residues) spans 373 to 382 (SGEETADDAR). 3 residues coordinate isopentenyl diphosphate: Lys436, Arg439, and His468. Mg(2+) is bound by residues Asp475 and Asp479. The short motif at 475 to 479 (DDIED) is the DDXXD 2 element. Arg484 serves as a coordination point for dimethylallyl diphosphate. Residue Arg485 coordinates isopentenyl diphosphate. Positions 562, 563, 601, 608, 618, and 628 each coordinate dimethylallyl diphosphate.

In the N-terminal section; belongs to the terpene synthase family. The protein in the C-terminal section; belongs to the FPP/GGPP synthase family. It depends on Mg(2+) as a cofactor.

It carries out the reaction isopentenyl diphosphate + (2E,6E)-farnesyl diphosphate = (2E,6E,10E)-geranylgeranyl diphosphate + diphosphate. It catalyses the reaction isopentenyl diphosphate + (2E,6E,10E)-geranylgeranyl diphosphate = (2E,6E,10E,14E)-geranylfarnesyl diphosphate + diphosphate. The enzyme catalyses (2E,6E,10E,14E)-geranylfarnesyl diphosphate + H2O = ophiobolin F + diphosphate. The protein operates within secondary metabolite biosynthesis; terpenoid biosynthesis. Its function is as follows. Bifunctional sesterterpene synthase that converts isopentenyl diphosphate (IPP) and dimethylallyl diphosphate (DMAPP) into ophiobolin F. The C-terminal prenyltransferase (PT) domain of AcldOS converts isopentenyl diphosphate and dimethylallyl diphosphate into geranylfarnesyl diphosphate (GFPP), whereas the N-terminal terpene cyclase (TC) domain catalyzes the cyclization of GFPP to ophiobolin F. In Aspergillus calidoustus, this protein is Ophiobolin F synthase.